We begin with the raw amino-acid sequence, 139 residues long: Actin-depolymerizing factor 1 (139 aa).

In terms of domain architecture, ADF-H spans 5–139 (ASGMAVHDDC…DLDVFRSRAN (135 aa)). Ser-6 carries the post-translational modification Phosphoserine; by CPK3.

Belongs to the actin-binding proteins ADF family. Interacts with the 14-3-3-like protein GRF6/AFT1. Phosphorylation at Ser-6 by CPK3/CDPK6 inhibits actin-depolimerizing activity. As to expression, expressed in vascular tissues of all organs.

It localises to the cytoplasm. The protein resides in the cytoskeleton. Actin-depolymerizing protein. Stimulates F-actin depolymerization. Involved in plant development, cell organ expansion and flowering by controlling breakdown of thick actin cables. Severs actin filaments or bundles and promotes actin cytoskeleton disassembly. Binds monomeric actin (G-actin) with a marked preference for the ADP-loaded form and inhibits the rate of nucleotide exchange on G-actin. This is Actin-depolymerizing factor 1 (ADF1) from Arabidopsis thaliana (Mouse-ear cress).